The sequence spans 117 residues: UPF0321 protein PJ695.01c (117 aa).

An N-terminal signal peptide occupies residues Met-1 to Ala-17. Asn-39, Asn-65, Asn-71, and Asn-104 each carry an N-linked (GlcNAc...) asparagine glycan.

The protein belongs to the UPF0321 family.

The polypeptide is UPF0321 protein PJ695.01c (Schizosaccharomyces pombe (strain 972 / ATCC 24843) (Fission yeast)).